The following is a 211-amino-acid chain: Endonuclease YncB (211 aa).

Residues 1 to 19 (MKKILISMIAIVLSITLAA) form the signal peptide. Cys20 carries N-palmitoyl cysteine lipidation. The S-diacylglycerol cysteine moiety is linked to residue Cys20. Residues 24-63 (HAAKNHSDSNGTEQVSQDTHSNEYNQTEQKAGTPHSKNQK) form a disordered region. Over residues 31-53 (DSNGTEQVSQDTHSNEYNQTEQK) the composition is skewed to polar residues. One can recognise a TNase-like domain in the interval 64–197 (KLVNVTLDRA…KSDKLSIWSK (134 aa)). Residue Asp77 participates in Ca(2+) binding. Arg91 is an active-site residue. Positions 96 and 97 each coordinate Ca(2+). Residues Glu99 and Arg142 contribute to the active site.

The protein belongs to the thermonuclease family. Ca(2+) is required as a cofactor.

It localises to the cell membrane. Inhibited by aurintricalboxylic acid but not by Zn(2+). In terms of biological role, shows DNase activity on double strand DNA. This is Endonuclease YncB (yncB) from Bacillus subtilis (strain 168).